The following is a 205-amino-acid chain: MSAIAPGMILFAYLCGSISSAILVCRIAGLPDPRQSGSGNPGATNVLRIGGKGAAVAVLIFDVLKGMLPVWGAYALGVTPFWLGLIAIAACLGHIWPVFFGFKGGKGVATAFGAIAPIGWDLTGVMAGTWLLTVLLSGYSSLGAIVSALIAPFYVWWFKPQFTFPVSMLSCLILLRHHDNIQRLWRRQETKIWTKLKKKREKDPQ.

5 helical membrane-spanning segments follow: residues Ile-4–Val-24, Val-56–Leu-76, Phe-81–Gly-101, Phe-112–Leu-132, and Gly-138–Phe-158.

It belongs to the PlsY family. Probably interacts with PlsX.

Its subcellular location is the cell inner membrane. It catalyses the reaction an acyl phosphate + sn-glycerol 3-phosphate = a 1-acyl-sn-glycero-3-phosphate + phosphate. The protein operates within lipid metabolism; phospholipid metabolism. Functionally, catalyzes the transfer of an acyl group from acyl-phosphate (acyl-PO(4)) to glycerol-3-phosphate (G3P) to form lysophosphatidic acid (LPA). This enzyme utilizes acyl-phosphate as fatty acyl donor, but not acyl-CoA or acyl-ACP. The chain is Glycerol-3-phosphate acyltransferase from Citrobacter koseri (strain ATCC BAA-895 / CDC 4225-83 / SGSC4696).